Reading from the N-terminus, the 159-residue chain is Eukaryotic translation initiation factor 5A-1 (159 aa).

Basic and acidic residues predominate over residues 1 to 12 (MSDEEHHFESKA). Positions 1–23 (MSDEEHHFESKADAGASKTYPQQ) are disordered. At K52 the chain carries Hypusine.

It belongs to the eIF-5A family. Post-translationally, lys-52 undergoes hypusination, a unique post-translational modification that consists in the addition of a butylamino group from spermidine to lysine side chain, leading to the formation of the unusual amino acid hypusine. eIF-5As are the only known proteins to undergo this modification, which is essential for their function.

Its function is as follows. Translation factor that promotes translation elongation and termination, particularly upon ribosome stalling at specific amino acid sequence contexts. Binds between the exit (E) and peptidyl (P) site of the ribosome and promotes rescue of stalled ribosome: specifically required for efficient translation of polyproline-containing peptides as well as other motifs that stall the ribosome. Acts as a ribosome quality control (RQC) cofactor by joining the RQC complex to facilitate peptidyl transfer during CAT tailing step. This Nicotiana plumbaginifolia (Leadwort-leaved tobacco) protein is Eukaryotic translation initiation factor 5A-1 (EIF-5A1).